The following is a 613-amino-acid chain: Pentatricopeptide repeat-containing protein At2g45350, chloroplastic (613 aa).

PPR repeat units lie at residues 85 to 119 (DPFL…GVSV), 120 to 154 (DKFS…GLWS), 155 to 185 (DLFL…MPKR), 186 to 216 (DSVS…MPME), 219 to 250 (NLIS…MPEK), 251 to 285 (DLIS…DVVT), 286 to 312 (WATM…MPHR), 313 to 347 (DVVA…SHLL), 349 to 383 (DDTT…QFYL), 384 to 414 (GGKL…IENK), 415 to 449 (SIDH…SLKP), 450 to 480 (DDIT…MRRK), and 486 to 516 (RLQH…MPVE). Residues 521–596 (IWRTFLTACS…IPGCSWIELD (76 aa)) are type E motif.

This sequence belongs to the PPR family. PCMP-E subfamily. As to quaternary structure, interacts with DYW1.

It localises to the plastid. Its subcellular location is the chloroplast. Its function is as follows. Plays a major role in chloroplast RNA editing. Acts as a site-recognition transacting factor to recruit C-deaminase. Involved in single RNA editing events. Required for the edition of the site 1 of ndhD (ndhD-1 site corresponding to cytidine-2), which is a plastid-encoded subunit of the NADH-plastoquinone oxidoreductase. The interaction with DYW1 is required for its function in editing the ndhD-1 site. This is Pentatricopeptide repeat-containing protein At2g45350, chloroplastic (CRR4) from Arabidopsis thaliana (Mouse-ear cress).